The following is a 269-amino-acid chain: Monofunctional glycosyltransferase (269 aa).

A helical membrane pass occupies residues alanine 46–serine 66.

It belongs to the glycosyltransferase 51 family.

The protein resides in the cell membrane. It carries out the reaction [GlcNAc-(1-&gt;4)-Mur2Ac(oyl-L-Ala-gamma-D-Glu-L-Lys-D-Ala-D-Ala)](n)-di-trans,octa-cis-undecaprenyl diphosphate + beta-D-GlcNAc-(1-&gt;4)-Mur2Ac(oyl-L-Ala-gamma-D-Glu-L-Lys-D-Ala-D-Ala)-di-trans,octa-cis-undecaprenyl diphosphate = [GlcNAc-(1-&gt;4)-Mur2Ac(oyl-L-Ala-gamma-D-Glu-L-Lys-D-Ala-D-Ala)](n+1)-di-trans,octa-cis-undecaprenyl diphosphate + di-trans,octa-cis-undecaprenyl diphosphate + H(+). It participates in cell wall biogenesis; peptidoglycan biosynthesis. Peptidoglycan polymerase that catalyzes glycan chain elongation using lipid-linked disaccharide-pentapeptide as the substrate. The protein is Monofunctional glycosyltransferase of Staphylococcus epidermidis (strain ATCC 35984 / DSM 28319 / BCRC 17069 / CCUG 31568 / BM 3577 / RP62A).